Consider the following 147-residue polypeptide: MVKPIHVLSGPNLNLLGTREPEIYGKDTLDDVRARCKARAAVRGLSVVFRQSNHEGALIDWVQEARTEACALVINPAGYGHTSIALLDALKTLNIPVIECHLSNPAAREDFRRHTYVSLAATGIVSGFGAASYELAIEAAAGLVGAN.

The Proton acceptor role is filled by tyrosine 24. Asparagine 75, histidine 81, and aspartate 88 together coordinate substrate. Histidine 101 functions as the Proton donor in the catalytic mechanism. Substrate is bound by residues 102–103 and arginine 112; that span reads LS.

Belongs to the type-II 3-dehydroquinase family. In terms of assembly, homododecamer.

The catalysed reaction is 3-dehydroquinate = 3-dehydroshikimate + H2O. It functions in the pathway metabolic intermediate biosynthesis; chorismate biosynthesis; chorismate from D-erythrose 4-phosphate and phosphoenolpyruvate: step 3/7. Functionally, catalyzes a trans-dehydration via an enolate intermediate. This chain is 3-dehydroquinate dehydratase, found in Caulobacter sp. (strain K31).